We begin with the raw amino-acid sequence, 278 residues long: Bifunctional protein FolD (278 aa).

NADP(+) contacts are provided by residues 164-166 and Thr-228; that span reads GRS.

This sequence belongs to the tetrahydrofolate dehydrogenase/cyclohydrolase family. As to quaternary structure, homodimer.

It carries out the reaction (6R)-5,10-methylene-5,6,7,8-tetrahydrofolate + NADP(+) = (6R)-5,10-methenyltetrahydrofolate + NADPH. The enzyme catalyses (6R)-5,10-methenyltetrahydrofolate + H2O = (6R)-10-formyltetrahydrofolate + H(+). It functions in the pathway one-carbon metabolism; tetrahydrofolate interconversion. Catalyzes the oxidation of 5,10-methylenetetrahydrofolate to 5,10-methenyltetrahydrofolate and then the hydrolysis of 5,10-methenyltetrahydrofolate to 10-formyltetrahydrofolate. This Mycoplasmopsis synoviae (strain 53) (Mycoplasma synoviae) protein is Bifunctional protein FolD.